The following is a 201-amino-acid chain: Imidazoleglycerol-phosphate dehydratase (201 aa).

The protein belongs to the imidazoleglycerol-phosphate dehydratase family.

The protein resides in the cytoplasm. It catalyses the reaction D-erythro-1-(imidazol-4-yl)glycerol 3-phosphate = 3-(imidazol-4-yl)-2-oxopropyl phosphate + H2O. Its pathway is amino-acid biosynthesis; L-histidine biosynthesis; L-histidine from 5-phospho-alpha-D-ribose 1-diphosphate: step 6/9. This chain is Imidazoleglycerol-phosphate dehydratase, found in Prochlorococcus marinus (strain AS9601).